The primary structure comprises 149 residues: Deoxyuridine 5'-triphosphate nucleotidohydrolase (149 aa).

Residues 65 to 67, asparagine 78, 82 to 84, and lysine 92 each bind substrate; these read RSG and TID.

Belongs to the dUTPase family. Mg(2+) serves as cofactor.

It catalyses the reaction dUTP + H2O = dUMP + diphosphate + H(+). It participates in pyrimidine metabolism; dUMP biosynthesis; dUMP from dCTP (dUTP route): step 2/2. Its function is as follows. This enzyme is involved in nucleotide metabolism: it produces dUMP, the immediate precursor of thymidine nucleotides and it decreases the intracellular concentration of dUTP so that uracil cannot be incorporated into DNA. The sequence is that of Deoxyuridine 5'-triphosphate nucleotidohydrolase from Chlorobium chlorochromatii (strain CaD3).